A 69-amino-acid polypeptide reads, in one-letter code: MSGEGKKHGSNVEPLRPTRPCPECGRPSVRERYPFCSERCRNVDLNRWLSGSYAIPVADDESKADDEDR.

The disordered stretch occupies residues 1–28; it reads MSGEGKKHGSNVEPLRPTRPCPECGRPS. Zn(2+)-binding residues include Cys-21, Cys-24, Cys-36, and Cys-40.

This sequence belongs to the DNA gyrase inhibitor YacG family. In terms of assembly, interacts with GyrB. Zn(2+) serves as cofactor.

Functionally, inhibits all the catalytic activities of DNA gyrase by preventing its interaction with DNA. Acts by binding directly to the C-terminal domain of GyrB, which probably disrupts DNA binding by the gyrase. This chain is DNA gyrase inhibitor YacG, found in Sinorhizobium fredii (strain NBRC 101917 / NGR234).